The sequence spans 339 residues: MNQSNASMTVIGAGSYGTALAITLARNGHQVVLWGHDPKHVATLERDRCNVAFLPDVPFPDTLRLESDLATALAASRNILVVVPSHVFGEVLRQIKPLMRPDARLVWATKGLEAETGRLLQDVAREALGDDIPLAVISGPTFAKELAAGLPTAISLASTDETFADDLQELLHCGKSFRVYSNPDFIGVQLGGAVKNVIAIGAGMSDGIGFGANARTALITRGLTEMSRLGAALGADPTTFMGMAGLGDLVLTCTDNQSRNRRFGMMLGQGMDVQSAQDKIGQVVEGYRNTKEVRELAHRFGVEMPITEEIYQVLYCGKNAREAALTLLGRARKDERSRH.

Positions 15, 16, 36, and 110 each coordinate NADPH. Sn-glycerol 3-phosphate is bound by residues lysine 110, glycine 139, and threonine 141. Alanine 143 lines the NADPH pocket. Sn-glycerol 3-phosphate is bound by residues lysine 195, aspartate 248, serine 258, arginine 259, and asparagine 260. Lysine 195 serves as the catalytic Proton acceptor. Residue arginine 259 participates in NADPH binding. NADPH is bound by residues valine 283 and glutamate 285.

It belongs to the NAD-dependent glycerol-3-phosphate dehydrogenase family.

Its subcellular location is the cytoplasm. It catalyses the reaction sn-glycerol 3-phosphate + NAD(+) = dihydroxyacetone phosphate + NADH + H(+). The enzyme catalyses sn-glycerol 3-phosphate + NADP(+) = dihydroxyacetone phosphate + NADPH + H(+). It functions in the pathway membrane lipid metabolism; glycerophospholipid metabolism. In terms of biological role, catalyzes the reduction of the glycolytic intermediate dihydroxyacetone phosphate (DHAP) to sn-glycerol 3-phosphate (G3P), the key precursor for phospholipid synthesis. In Citrobacter koseri (strain ATCC BAA-895 / CDC 4225-83 / SGSC4696), this protein is Glycerol-3-phosphate dehydrogenase [NAD(P)+].